We begin with the raw amino-acid sequence, 431 residues long: Serine--tRNA ligase (431 aa).

Residue 238 to 240 coordinates L-serine; it reads TAE. Residue 269-271 participates in ATP binding; the sequence is RSE. E292 provides a ligand contact to L-serine. Residue 356-359 coordinates ATP; it reads EISS. Residue S392 participates in L-serine binding.

Belongs to the class-II aminoacyl-tRNA synthetase family. Type-1 seryl-tRNA synthetase subfamily. In terms of assembly, homodimer. The tRNA molecule binds across the dimer.

Its subcellular location is the cytoplasm. It carries out the reaction tRNA(Ser) + L-serine + ATP = L-seryl-tRNA(Ser) + AMP + diphosphate + H(+). It catalyses the reaction tRNA(Sec) + L-serine + ATP = L-seryl-tRNA(Sec) + AMP + diphosphate + H(+). The protein operates within aminoacyl-tRNA biosynthesis; selenocysteinyl-tRNA(Sec) biosynthesis; L-seryl-tRNA(Sec) from L-serine and tRNA(Sec): step 1/1. Functionally, catalyzes the attachment of serine to tRNA(Ser). Is also able to aminoacylate tRNA(Sec) with serine, to form the misacylated tRNA L-seryl-tRNA(Sec), which will be further converted into selenocysteinyl-tRNA(Sec). This chain is Serine--tRNA ligase, found in Pectobacterium atrosepticum (strain SCRI 1043 / ATCC BAA-672) (Erwinia carotovora subsp. atroseptica).